We begin with the raw amino-acid sequence, 160 residues long: Cyclic pyranopterin monophosphate synthase (160 aa).

Substrate is bound by residues 77-79 (LCH) and 115-116 (ME). Asp130 is a catalytic residue.

The protein belongs to the MoaC family. In terms of assembly, homohexamer; trimer of dimers.

The catalysed reaction is (8S)-3',8-cyclo-7,8-dihydroguanosine 5'-triphosphate = cyclic pyranopterin phosphate + diphosphate. It functions in the pathway cofactor biosynthesis; molybdopterin biosynthesis. Functionally, catalyzes the conversion of (8S)-3',8-cyclo-7,8-dihydroguanosine 5'-triphosphate to cyclic pyranopterin monophosphate (cPMP). This Parvibaculum lavamentivorans (strain DS-1 / DSM 13023 / NCIMB 13966) protein is Cyclic pyranopterin monophosphate synthase.